The following is a 376-amino-acid chain: Protein FhaE (376 aa).

A signal peptide spans 1–37 (MSQIFADRRAAVPARVISFCGAALAVWAGLAVQPAMA).

The sequence is that of Protein FhaE (fhaE) from Bordetella pertussis (strain Tohama I / ATCC BAA-589 / NCTC 13251).